The following is a 638-amino-acid chain: XK-related protein 6 (638 aa).

2 disordered regions span residues 24-43 and 82-117; these read VGSG…GGDG and RSAA…PASP. The span at 33–43 shows a compositional bias: gly residues; the sequence is PGGGGCGGGDG. The next 7 membrane-spanning stretches (helical) occupy residues 127–147, 158–178, 315–335, 369–389, 410–430, 439–459, and 470–490; these read LWIV…LWLA, CFGL…SLSF, TLPC…LASY, VISF…FVVV, WEEI…WFNV, MFAY…LWYF, and AVPA…LMLL.

This sequence belongs to the XK family.

It is found in the cell membrane. In Mus musculus (Mouse), this protein is XK-related protein 6.